The primary structure comprises 115 residues: T cell receptor beta variable 11-2 (115 aa).

Residues 1–21 form the signal peptide; sequence MGTRLLCWAALCLLGAELTEA. The Ig-like domain occupies 22 to 115; that stretch reads GVAQSPRYKI…SAVYLCASSL (94 aa). Cys42 and Cys111 are disulfide-bonded.

In terms of assembly, alpha-beta TR is a heterodimer composed of an alpha and beta chain; disulfide-linked. The alpha-beta TR is associated with the transmembrane signaling CD3 coreceptor proteins to form the TR-CD3 (TcR or TCR). The assembly of alpha-beta TR heterodimers with CD3 occurs in the endoplasmic reticulum where a single alpha-beta TR heterodimer associates with one CD3D-CD3E heterodimer, one CD3G-CD3E heterodimer and one CD247 homodimer forming a stable octameric structure. CD3D-CD3E and CD3G-CD3E heterodimers preferentially associate with TR alpha and TR beta chains, respectively. The association of the CD247 homodimer is the last step of TcR assembly in the endoplasmic reticulum and is required for transport to the cell surface.

Its subcellular location is the cell membrane. In terms of biological role, v region of the variable domain of T cell receptor (TR) beta chain that participates in the antigen recognition. Alpha-beta T cell receptors are antigen specific receptors which are essential to the immune response and are present on the cell surface of T lymphocytes. Recognize peptide-major histocompatibility (MH) (pMH) complexes that are displayed by antigen presenting cells (APC), a prerequisite for efficient T cell adaptive immunity against pathogens. Binding of alpha-beta TR to pMH complex initiates TR-CD3 clustering on the cell surface and intracellular activation of LCK that phosphorylates the ITAM motifs of CD3G, CD3D, CD3E and CD247 enabling the recruitment of ZAP70. In turn ZAP70 phosphorylates LAT, which recruits numerous signaling molecules to form the LAT signalosome. The LAT signalosome propagates signal branching to three major signaling pathways, the calcium, the mitogen-activated protein kinase (MAPK) kinase and the nuclear factor NF-kappa-B (NF-kB) pathways, leading to the mobilization of transcription factors that are critical for gene expression and essential for T cell growth and differentiation. The T cell repertoire is generated in the thymus, by V-(D)-J rearrangement. This repertoire is then shaped by intrathymic selection events to generate a peripheral T cell pool of self-MH restricted, non-autoaggressive T cells. Post-thymic interaction of alpha-beta TR with the pMH complexes shapes TR structural and functional avidity. The protein is T cell receptor beta variable 11-2 of Homo sapiens (Human).